The following is a 309-amino-acid chain: Malonyl CoA-acyl carrier protein transacylase (309 aa).

Residues Ser-92 and His-201 contribute to the active site.

This sequence belongs to the FabD family.

The catalysed reaction is holo-[ACP] + malonyl-CoA = malonyl-[ACP] + CoA. Its pathway is lipid metabolism; fatty acid biosynthesis. This Salmonella typhimurium (strain LT2 / SGSC1412 / ATCC 700720) protein is Malonyl CoA-acyl carrier protein transacylase (fabD).